The chain runs to 452 residues: Golgi reassembly-stacking protein 2 (452 aa).

Residue Gly-2 is the site of N-myristoyl glycine attachment. 2 PDZ GRASP-type domains span residues 15–105 (EGYH…FCSF) and 111–199 (NVWH…YGYL). Residues 15-215 (EGYHVLRVQE…PFEEGKKISL (201 aa)) are GRASP. A dimethylated arginine mark is found at Arg-30 and Arg-47. An important for membrane binding region spans residues 194–199 (IGYGYL). A Phosphoserine modification is found at Ser-214. Thr-222 and Thr-225 each carry phosphothreonine. Residues 372–424 (PESSSAASSGELLSSLPPTSNAPSDPATTTAKADAASSLTVDVTPPTAKAPTT) are compositionally biased toward low complexity. Positions 372 to 452 (PESSSAASSG…AVDANASESP (81 aa)) are disordered. Ser-409 carries the phosphoserine modification. Phosphothreonine is present on residues Thr-415 and Thr-433. Residues Ser-436, Ser-441, Ser-449, and Ser-451 each carry the phosphoserine modification.

The protein belongs to the GORASP family. In terms of assembly, homodimer. Homooligomer. ER stress induces phosphorylation-dependent monomerization. Interacts with BLZF1/Golgin 45. Identified in a complex with RAB2 and GORASP2. Interacts with JAM2 and JAM3. Interacts with members of the p24 cargo receptors. Interacts with CNIH1 and the cytoplasmic domain of transmembrane TGFA, prior its transit in the trans-Golgi. Interacts with KCTD5. Interacts with TMED2 and TMED3. Interacts with SEC16A in response to ER stress. Interacts (via PDZ GRASP-type 1 domain) with core-glycosylated CFTR in response to ER stress. Myristoylated. Myristoylation is essential for the Golgi targeting. In terms of processing, palmitoylated. Post-translationally, phosphorylated in mitotic cells. ER stress-induced phosphorylation at Ser-441 induces monomerization and subsequent relocalization from Golgi to ER which is essential for mediating unconventional (ER/Golgi-independent) trafficking of CFTR to the cell membrane.

The protein localises to the golgi apparatus membrane. Its subcellular location is the endoplasmic reticulum membrane. It localises to the golgi apparatus. Functionally, key structural protein of the Golgi apparatus. The membrane cisternae of the Golgi apparatus adhere to each other to form stacks, which are aligned side by side to form the Golgi ribbon. Acting in concert with GORASP1/GRASP65, is required for the formation and maintenance of the Golgi ribbon, and may be dispensable for the formation of stacks. However, other studies suggest that GORASP2 plays a role in the assembly and membrane stacking of the Golgi cisternae, and in the process by which Golgi stacks reform after breakdown during mitosis and meiosis. May regulate the intracellular transport and presentation of a defined set of transmembrane proteins, such as transmembrane TGFA. Required for normal acrosome formation during spermiogenesis and normal male fertility, probably by promoting colocalization of JAM2 and JAM3 at contact sites between germ cells and Sertoli cells. Mediates ER stress-induced unconventional (ER/Golgi-independent) trafficking of core-glycosylated CFTR to cell membrane. This chain is Golgi reassembly-stacking protein 2 (GORASP2), found in Homo sapiens (Human).